Consider the following 172-residue polypeptide: NADH-ubiquinone oxidoreductase chain 6 (172 aa).

Transmembrane regions (helical) follow at residues 1 to 21, 24 to 44, 53 to 73, 86 to 106, and 140 to 160; these read MAFY…AIAS, APYF…GILV, LILF…SAAL, VVFW…GFLL, and GKML…VLEV.

It belongs to the complex I subunit 6 family. Core subunit of respiratory chain NADH dehydrogenase (Complex I) which is composed of 45 different subunits.

Its subcellular location is the mitochondrion inner membrane. The catalysed reaction is a ubiquinone + NADH + 5 H(+)(in) = a ubiquinol + NAD(+) + 4 H(+)(out). In terms of biological role, core subunit of the mitochondrial membrane respiratory chain NADH dehydrogenase (Complex I) which catalyzes electron transfer from NADH through the respiratory chain, using ubiquinone as an electron acceptor. Essential for the catalytic activity and assembly of complex I. This chain is NADH-ubiquinone oxidoreductase chain 6 (mt-nd6), found in Danio rerio (Zebrafish).